Here is a 359-residue protein sequence, read N- to C-terminus: Ribosomal RNA small subunit methyltransferase mra1 (359 aa).

The segment covering Met1–Arg10 has biased composition (basic residues). 2 disordered regions span residues Met1–Glu62 and Val98–Arg118. Ser12 bears the Phosphoserine mark. Residues Lys18 to Thr39 are compositionally biased toward polar residues. Thr33 carries the phosphothreonine modification. A Phosphoserine modification is found at Ser100. Residues Leu287, Gly314, Gly319 to Asp321, and Ile334 to Leu339 contribute to the S-adenosyl-L-methionine site.

The protein belongs to the class IV-like SAM-binding methyltransferase superfamily. RNA methyltransferase NEP1 family. As to quaternary structure, homodimer.

Its subcellular location is the nucleus. It localises to the nucleolus. It catalyses the reaction a pseudouridine in rRNA + S-adenosyl-L-methionine = an N(1)-methylpseudouridine in rRNA + S-adenosyl-L-homocysteine + H(+). Functionally, S-adenosyl-L-methionine-dependent pseudouridine N(1)-methyltransferase that methylates the pseudouridine corresponding to position 1189 (Psi1189) in S.cerevisiae 18S rRNA. Involved the biosynthesis of the hypermodified N1-methyl-N3-(3-amino-3-carboxypropyl) pseudouridine (m1acp3-Psi) conserved in eukaryotic 18S rRNA. Also has an essential role in 40S ribosomal subunit biogenesis independent on its methyltransferase activity, facilitating the incorporation of ribosomal protein S19 during the formation of pre-ribosomes. Essential for cell growth. It also has a key role in promoting the mating function. In Schizosaccharomyces pombe (strain 972 / ATCC 24843) (Fission yeast), this protein is Ribosomal RNA small subunit methyltransferase mra1.